Consider the following 208-residue polypeptide: MNEAEKISNLDEPRLFEEDGIEARVAALVIPLLKPLGFRLVRVKLLGQNGLTLQIMVERADGSLTVEDCETVSRTVSPLLDVENVIERKYHLEISSPGIDRPLVRKSDFFHWQGHLAKIETKITIDGRRKFRGTLTNITQDGFILNADKAAYGEAMYTSISFCDIIGAHLVLTDELIRDALKKNKDLSQQFIPEDNPTDSIQTLNFKK.

The protein belongs to the RimP family.

Its subcellular location is the cytoplasm. In terms of biological role, required for maturation of 30S ribosomal subunits. The chain is Ribosome maturation factor RimP from Bartonella tribocorum (strain CIP 105476 / IBS 506).